The primary structure comprises 204 residues: ATP-dependent Clp protease proteolytic subunit 1 (204 aa).

The Nucleophile role is filled by Ser97. His122 is an active-site residue.

Belongs to the peptidase S14 family. In terms of assembly, fourteen ClpP subunits assemble into 2 heptameric rings which stack back to back to give a disk-like structure with a central cavity, resembling the structure of eukaryotic proteasomes.

Its subcellular location is the cytoplasm. It carries out the reaction Hydrolysis of proteins to small peptides in the presence of ATP and magnesium. alpha-casein is the usual test substrate. In the absence of ATP, only oligopeptides shorter than five residues are hydrolyzed (such as succinyl-Leu-Tyr-|-NHMec, and Leu-Tyr-Leu-|-Tyr-Trp, in which cleavage of the -Tyr-|-Leu- and -Tyr-|-Trp bonds also occurs).. Its function is as follows. Cleaves peptides in various proteins in a process that requires ATP hydrolysis. Has a chymotrypsin-like activity. Plays a major role in the degradation of misfolded proteins. The protein is ATP-dependent Clp protease proteolytic subunit 1 of Trichormus variabilis (strain ATCC 29413 / PCC 7937) (Anabaena variabilis).